The chain runs to 226 residues: Cytidylate kinase (226 aa).

10 to 18 (GPASSGKST) provides a ligand contact to ATP.

The protein belongs to the cytidylate kinase family. Type 1 subfamily.

It is found in the cytoplasm. It catalyses the reaction CMP + ATP = CDP + ADP. It carries out the reaction dCMP + ATP = dCDP + ADP. In Streptococcus equi subsp. zooepidemicus (strain MGCS10565), this protein is Cytidylate kinase.